Reading from the N-terminus, the 499-residue chain is Cytochrome P450 81E8 (499 aa).

Residues 3–23 form a helical membrane-spanning segment; that stretch reads TFYLSLIISLFFLIITLKVFF. C436 provides a ligand contact to heme.

It belongs to the cytochrome P450 family. Heme is required as a cofactor.

It localises to the membrane. Functionally, probable monooxygenases exhibiting no activity with isoflavones such as formononetin, biochanin A, pseudobaptigenin, daidzein, genistein, isoformononetin and prunetin, or with flavonoids including naringenin, liquiritigenin, apigenin, luteolin, or kaempferol. In Medicago truncatula (Barrel medic), this protein is Cytochrome P450 81E8.